A 137-amino-acid polypeptide reads, in one-letter code: Large ribosomal subunit protein uL16 (137 aa).

The protein belongs to the universal ribosomal protein uL16 family. In terms of assembly, part of the 50S ribosomal subunit.

Its function is as follows. Binds 23S rRNA and is also seen to make contacts with the A and possibly P site tRNAs. This Allorhizobium ampelinum (strain ATCC BAA-846 / DSM 112012 / S4) (Agrobacterium vitis (strain S4)) protein is Large ribosomal subunit protein uL16.